Consider the following 123-residue polypeptide: Venom protein 29 (123 aa).

Residues M1–G18 form the signal peptide.

Post-translationally, contains 3 disulfide bonds. Expressed by the venom gland.

It is found in the secreted. The sequence is that of Venom protein 29 from Lychas mucronatus (Chinese swimming scorpion).